The chain runs to 420 residues: MPLQVSDYSWQQTKTAVFLSLPLKGVCVRDTDVFCTENYLKVNFPPFLFEAFLYAPIDDESSKAKIGNDTIVFTLYKKEAAMWETLSVTGVDKETMQRIREKSILQAQERAKEATEAKAAAKREDQKYALSVMMKIEEEERKKIEDMKENERIKATKELEAWKEYQRKAEEHKKIQREEKLCQKEKQIKEERKKLKYKSLTRNSASRNLAPKGRNSENIFTEKLKEDSIPAPRSVGSIKINFTPRVFPTALRESQVAEEEEWLHKQAEARRAMNTDIAELCDLKEEEKNPEWLKDKGNKLFATENYLAAINAYNLAIRLNNKMPLLYLNRAACHLKLKNLHKAIEDSSKALELLMPPVTDNANARMKAHVRRGTAFCQLELYVEGLQDYEAALKIDPSNKIVQIDAEKIRNVIQGTELKS.

Residues 3-87 (LQVSDYSWQQ…KEAAMWETLS (85 aa)) enclose the CS domain. The tract at residues 7–103 (DYSWQQTKTA…ETMQRIREKS (97 aa)) is mediates interaction with ESR1 and STUB1. TPR repeat units lie at residues 290–323 (PEWL…NNKM), 324–357 (PLLY…LMPP), and 366–399 (MKAH…DPSN).

Interacts with ZMYND10. Interacts with STUB1. Interacts with ESR1 and ESR2. Interacts with DNAAF2. Interacts with CCT3, CCT4, CCT5 and CCT8. Interacts with DNAAF6/PIH1D3.

The protein resides in the nucleus. Its subcellular location is the cytoplasm. It is found in the cell projection. It localises to the neuron projection. The protein localises to the dynein axonemal particle. Functionally, involved in neuronal migration during development of the cerebral neocortex. May regulate the stability and proteasomal degradation of the estrogen receptors that play an important role in neuronal differentiation, survival and plasticity. Axonemal dynein assembly factor required for ciliary motility. The protein is Dynein axonemal assembly factor 4 of Pongo pygmaeus (Bornean orangutan).